The chain runs to 387 residues: Diphthine methyltransferase (387 aa).

WD repeat units lie at residues 62–102 (NTYG…KDDF), 119–159 (EKDV…VQFT), 195–237 (PHEL…FIWS), 241–286 (IHDA…ESIF), and 357–387 (GHDS…TWIV).

The protein belongs to the DPH7 family. As to quaternary structure, interacts with CAN1 and RTT10.

The protein localises to the cytoplasm. Its subcellular location is the endosome. The enzyme catalyses diphthine methyl ester-[translation elongation factor 2] + H2O = diphthine-[translation elongation factor 2] + methanol + H(+). It participates in protein modification; peptidyl-diphthamide biosynthesis. Functionally, catalyzes the demethylation of diphthine methyl ester to form diphthine, an intermediate in diphthamide biosynthesis, a post-translational modification of histidine which occurs in translation elongation factor 2 (EFT1 and EFT2). Also plays a role in the regulation of the retromer complex and is required for the recycling from endosomes of plasma membrane proteins like CAN1 and MUP1. Identified in a screen for mutants with decreased levels of rDNA transcription. The chain is Diphthine methyltransferase (RRT2) from Saccharomyces cerevisiae (strain ATCC 204508 / S288c) (Baker's yeast).